The sequence spans 64 residues: Large ribosomal subunit protein bL35 (64 aa).

It belongs to the bacterial ribosomal protein bL35 family.

This chain is Large ribosomal subunit protein bL35, found in Coxiella burnetii (strain RSA 493 / Nine Mile phase I).